The following is a 65-amino-acid chain: Large ribosomal subunit protein bL35 (65 aa).

It belongs to the bacterial ribosomal protein bL35 family.

The polypeptide is Large ribosomal subunit protein bL35 (Clostridium acetobutylicum (strain ATCC 824 / DSM 792 / JCM 1419 / IAM 19013 / LMG 5710 / NBRC 13948 / NRRL B-527 / VKM B-1787 / 2291 / W)).